The following is a 177-amino-acid chain: ATP synthase subunit delta (177 aa).

It belongs to the ATPase delta chain family. As to quaternary structure, F-type ATPases have 2 components, F(1) - the catalytic core - and F(0) - the membrane proton channel. F(1) has five subunits: alpha(3), beta(3), gamma(1), delta(1), epsilon(1). F(0) has three main subunits: a(1), b(2) and c(10-14). The alpha and beta chains form an alternating ring which encloses part of the gamma chain. F(1) is attached to F(0) by a central stalk formed by the gamma and epsilon chains, while a peripheral stalk is formed by the delta and b chains.

The protein localises to the cell inner membrane. In terms of biological role, f(1)F(0) ATP synthase produces ATP from ADP in the presence of a proton or sodium gradient. F-type ATPases consist of two structural domains, F(1) containing the extramembraneous catalytic core and F(0) containing the membrane proton channel, linked together by a central stalk and a peripheral stalk. During catalysis, ATP synthesis in the catalytic domain of F(1) is coupled via a rotary mechanism of the central stalk subunits to proton translocation. Functionally, this protein is part of the stalk that links CF(0) to CF(1). It either transmits conformational changes from CF(0) to CF(1) or is implicated in proton conduction. This Edwardsiella ictaluri (strain 93-146) protein is ATP synthase subunit delta.